We begin with the raw amino-acid sequence, 373 residues long: Erythronate-4-phosphate dehydrogenase (373 aa).

Substrate contacts are provided by Ser45 and Thr66. NAD(+)-binding residues include Asp146 and Thr175. Arg208 is an active-site residue. NAD(+) is bound at residue Asp232. Glu237 is an active-site residue. His254 (proton donor) is an active-site residue. Gly257 lines the NAD(+) pocket. Tyr258 provides a ligand contact to substrate.

Belongs to the D-isomer specific 2-hydroxyacid dehydrogenase family. PdxB subfamily. In terms of assembly, homodimer.

It is found in the cytoplasm. It carries out the reaction 4-phospho-D-erythronate + NAD(+) = (R)-3-hydroxy-2-oxo-4-phosphooxybutanoate + NADH + H(+). It functions in the pathway cofactor biosynthesis; pyridoxine 5'-phosphate biosynthesis; pyridoxine 5'-phosphate from D-erythrose 4-phosphate: step 2/5. Its function is as follows. Catalyzes the oxidation of erythronate-4-phosphate to 3-hydroxy-2-oxo-4-phosphonooxybutanoate. The sequence is that of Erythronate-4-phosphate dehydrogenase from Serratia proteamaculans (strain 568).